The primary structure comprises 122 residues: Large ribosomal subunit protein uL14 (122 aa).

Belongs to the universal ribosomal protein uL14 family. Part of the 50S ribosomal subunit. Forms a cluster with proteins L3 and L19. In the 70S ribosome, L14 and L19 interact and together make contacts with the 16S rRNA in bridges B5 and B8.

Its function is as follows. Binds to 23S rRNA. Forms part of two intersubunit bridges in the 70S ribosome. The chain is Large ribosomal subunit protein uL14 from Streptococcus pyogenes serotype M2 (strain MGAS10270).